The primary structure comprises 236 residues: Bidirectional sugar transporter SWEET2 (236 aa).

Topologically, residues M1–D15 are extracellular. Residue N7 is glycosylated (N-linked (GlcNAc...) asparagine). Residues V16–F36 traverse the membrane as a helical segment. The MtN3/slv 1 domain occupies G18 to K103. The Cytoplasmic segment spans residues R37–G50. Residues L51 to I71 traverse the membrane as a helical segment. At S72–A76 the chain is on the extracellular side. The chain crosses the membrane as a helical span at residues M77–I97. The Cytoplasmic segment spans residues M98–M108. The helical transmembrane segment at L109–I129 threads the bilayer. The Extracellular segment spans residues P130–Y137. A helical membrane pass occupies residues F138–I158. In terms of domain architecture, MtN3/slv 2 spans F138 to N221. Topologically, residues N159–M170 are cytoplasmic. The chain crosses the membrane as a helical span at residues P171–F191. Topologically, residues N192–D194 are extracellular. The chain crosses the membrane as a helical span at residues A195–Y215. Residues C216–V236 lie on the Cytoplasmic side of the membrane.

This sequence belongs to the SWEET sugar transporter family. In terms of assembly, forms heterooligomers with SWEET17.

The protein resides in the cell membrane. Functionally, mediates both low-affinity uptake and efflux of sugar across the plasma membrane. The sequence is that of Bidirectional sugar transporter SWEET2 from Arabidopsis thaliana (Mouse-ear cress).